The sequence spans 147 residues: Alpha-amylase/trypsin inhibitor (147 aa).

The N-terminal stretch at 1-21 (MASDHRRFVLSGAVLLSVLAV) is a signal peptide.

The protein belongs to the protease inhibitor I6 (cereal trypsin/alpha-amylase inhibitor) family. Five disulfide bonds, which are essential for the inhibitor activity, are probably present. As to expression, endosperm.

Its subcellular location is the secreted. Functionally, alpha-amylase/trypsin inhibitor. This is Alpha-amylase/trypsin inhibitor from Hordeum vulgare (Barley).